Consider the following 441-residue polypeptide: Probable D-serine dehydratase (441 aa).

Position 117 is an N6-(pyridoxal phosphate)lysine (K117).

This sequence belongs to the serine/threonine dehydratase family. DsdA subfamily. Pyridoxal 5'-phosphate serves as cofactor.

The catalysed reaction is D-serine = pyruvate + NH4(+). This chain is Probable D-serine dehydratase, found in Acinetobacter baylyi (strain ATCC 33305 / BD413 / ADP1).